A 492-amino-acid chain; its full sequence is Probable sphingolipid transporter spinster homolog 1 (492 aa).

A helical membrane pass occupies residues 29–49 (FVTILCIINLINYVDRGVIAS). 2 N-linked (GlcNAc...) asparagine glycosylation sites follow: Asn-53 and Asn-76. The next 7 helical transmembrane spans lie at 83–103 (GLLS…FAGL), 119–139 (VWTI…IAVF), 141–161 (MFVG…IDDS), 169–189 (FWLG…YVFG), 200–220 (WAFY…FCIK), 279–299 (VFIV…AYSY), and 317–337 (IFGG…SYVL). An N-linked (GlcNAc...) asparagine glycan is attached at Asn-341. 4 helical membrane-spanning segments follow: residues 348–368 (FKLL…AFLM), 372–392 (YAFI…QAPV), 407–427 (LSMA…SSPL), and 442–462 (TLII…GIFM). The residue at position 472 (Ser-472) is a Phosphoserine. Acidic residues predominate over residues 472-481 (SEDDEVEEDK). A disordered region spans residues 472 to 492 (SEDDEVEEDKLESKTENSTLA). N-linked (GlcNAc...) asparagine glycosylation is present at Asn-488.

Belongs to the major facilitator superfamily. Spinster (TC 2.A.1.49) family.

It is found in the late endosome membrane. The protein resides in the lysosome membrane. Its function is as follows. Probable sphingolipid transporter that plays a central role in endosomes and/or lysosomes storage. This chain is Probable sphingolipid transporter spinster homolog 1, found in Arabidopsis thaliana (Mouse-ear cress).